We begin with the raw amino-acid sequence, 470 residues long: UDP-N-acetylmuramate--L-alanine ligase (470 aa).

An ATP-binding site is contributed by 118–124; sequence GTHGKTT.

It belongs to the MurCDEF family.

Its subcellular location is the cytoplasm. It catalyses the reaction UDP-N-acetyl-alpha-D-muramate + L-alanine + ATP = UDP-N-acetyl-alpha-D-muramoyl-L-alanine + ADP + phosphate + H(+). The protein operates within cell wall biogenesis; peptidoglycan biosynthesis. Functionally, cell wall formation. In Cereibacter sphaeroides (strain ATCC 17029 / ATH 2.4.9) (Rhodobacter sphaeroides), this protein is UDP-N-acetylmuramate--L-alanine ligase.